A 295-amino-acid chain; its full sequence is MDQKQIEEIVRSVMASMGQAAPAPSEAKCATTTCTTPVTSESCALDLGSAEAKAWIGVENPHRADVLTELRRSTVARVCTGRAGPRPRTQALLRFLADHSRSKDTVLKEVPEEWVKAQGLLEVRSEISDKNLYLTRPDMGRRLCAEAVEALKAQCVANPDVQVVISDGLSTDAITVNYEEILPPLMAGLKQAGLKVGTPFFVRYGRVKIEDQIGEILGAKVVILLVGERPGLGQSESLSCYAVYSPRIATTVEADRTCISNIHQGGTPPVEAAAVIVDLAKRMLEQKASGINMTR.

3 residues coordinate adenosylcob(III)alamin: Val-207, Glu-228, and Cys-258.

This sequence belongs to the EutC family. In terms of assembly, the basic unit is a heterodimer which dimerizes to form tetramers. The heterotetramers trimerize; 6 large subunits form a core ring with 6 small subunits projecting outwards. Requires adenosylcob(III)alamin as cofactor.

The protein resides in the bacterial microcompartment. It carries out the reaction ethanolamine = acetaldehyde + NH4(+). It functions in the pathway amine and polyamine degradation; ethanolamine degradation. In terms of biological role, catalyzes the deamination of various vicinal amino-alcohols to oxo compounds. Allows this organism to utilize ethanolamine as the sole source of nitrogen and carbon in the presence of external vitamin B12. This is Ethanolamine ammonia-lyase small subunit from Escherichia coli (strain SMS-3-5 / SECEC).